Consider the following 152-residue polypeptide: Nucleoside diphosphate kinase B (152 aa).

Residues 1 to 66 (MANLERTFIA…DRPFFPGLVK (66 aa)) form an interaction with AKAP13 region. K12, F60, R88, T94, R105, and N115 together coordinate ATP. The active-site Pros-phosphohistidine intermediate is H118.

This sequence belongs to the NDK family. As to quaternary structure, hexamer of two different chains: An and B (A6, A5B, A4B2, A3B3, A2B4, AB5, B6). Interacts with CAPN8. Interacts with AKAP13. Interacts with ITGB1BP1 (via C-terminal domain region). Interacts with BCL2L10. It depends on Mg(2+) as a cofactor. As to expression, ubiquitously expressed.

The protein resides in the cytoplasm. The protein localises to the cell projection. It is found in the lamellipodium. It localises to the ruffle. Its subcellular location is the perinuclear region. The protein resides in the nucleus. It carries out the reaction a 2'-deoxyribonucleoside 5'-diphosphate + ATP = a 2'-deoxyribonucleoside 5'-triphosphate + ADP. It catalyses the reaction a ribonucleoside 5'-diphosphate + ATP = a ribonucleoside 5'-triphosphate + ADP. The enzyme catalyses ATP + protein L-histidine = ADP + protein N-phospho-L-histidine.. Its function is as follows. Major role in the synthesis of nucleoside triphosphates other than ATP. The ATP gamma phosphate is transferred to the NDP beta phosphate via a ping-pong mechanism, using a phosphorylated active-site intermediate. Negatively regulates Rho activity by interacting with AKAP13/LBC. Acts as a transcriptional activator of the MYC gene; binds DNA non-specifically. Binds to both single-stranded guanine- and cytosine-rich strands within the nuclease hypersensitive element (NHE) III(1) region of the MYC gene promoter. Does not bind to duplex NHE III(1). Has G-quadruplex (G4) DNA-binding activity, which is independent of its nucleotide-binding and kinase activity. Binds both folded and unfolded G4 with similar low nanomolar affinities. Stabilizes folded G4s regardless of whether they are prefolded or not. Exhibits histidine protein kinase activity. This is Nucleoside diphosphate kinase B (NME2) from Homo sapiens (Human).